Reading from the N-terminus, the 316-residue chain is MIIGTRGSQLALAQTENVARLLKEKGVETSIKIIKTSGDRFTDRPLHAVSGGVGAFVRELDDVMLAGEIDIAVHSMKDMPTIRPKAIPTVAVLKRDTPFDILLTYDGTPLDELPEQSIIGTSSLRRTAQIRRYRPDIITQNLRGNIDTRLRKLREGQYDGIMLAKAGLERMGWEIEGEIFSPDFFCPSPNQGTVAVVTREGTEAEAAVSMLDHTESRIVTEIERILIAELGGGCTTPVGSYAEITPDRQEIHVRAEVLSLDGREAIRIDEFIPLRGGIEKARELGHRLVEMGGRRLAEEALLQISRGADSENSCDY.

Position 234 is an S-(dipyrrolylmethanemethyl)cysteine (Cys-234).

Belongs to the HMBS family. Dipyrromethane serves as cofactor.

The catalysed reaction is 4 porphobilinogen + H2O = hydroxymethylbilane + 4 NH4(+). Its pathway is porphyrin-containing compound metabolism; protoporphyrin-IX biosynthesis; coproporphyrinogen-III from 5-aminolevulinate: step 2/4. Functionally, tetrapolymerization of the monopyrrole PBG into the hydroxymethylbilane pre-uroporphyrinogen in several discrete steps. This is Probable porphobilinogen deaminase from Methanosarcina mazei (strain ATCC BAA-159 / DSM 3647 / Goe1 / Go1 / JCM 11833 / OCM 88) (Methanosarcina frisia).